The following is a 197-amino-acid chain: ATP-dependent Clp protease proteolytic subunit 1 (197 aa).

Ser96 (nucleophile) is an active-site residue. The active site involves His121.

Belongs to the peptidase S14 family. Fourteen ClpP subunits assemble into 2 heptameric rings which stack back to back to give a disk-like structure with a central cavity, resembling the structure of eukaryotic proteasomes.

It localises to the cytoplasm. The enzyme catalyses Hydrolysis of proteins to small peptides in the presence of ATP and magnesium. alpha-casein is the usual test substrate. In the absence of ATP, only oligopeptides shorter than five residues are hydrolyzed (such as succinyl-Leu-Tyr-|-NHMec, and Leu-Tyr-Leu-|-Tyr-Trp, in which cleavage of the -Tyr-|-Leu- and -Tyr-|-Trp bonds also occurs).. Cleaves peptides in various proteins in a process that requires ATP hydrolysis. Has a chymotrypsin-like activity. Plays a major role in the degradation of misfolded proteins. The protein is ATP-dependent Clp protease proteolytic subunit 1 of Synechococcus sp. (strain CC9902).